The following is a 594-amino-acid chain: APOBEC1 complementation factor (594 aa).

RRM domains lie at 56–134 (CEIF…ASVD), 136–218 (CRLF…WAEP), and 231–303 (KILY…LAKP). The required for nuclear localization stretch occupies residues 360-409 (HFPATKGHLSNRAIIRAPSVREIYMNVPVGAAGVRGLGGRGYLAYTGLGR). T499 carries the post-translational modification Phosphothreonine.

Part of the apolipoprotein B mRNA editing complex with APOBEC1. Interacts with TNPO2; TNPO2 may be responsible for transport of A1CF into the nucleus. Interacts with SYNCRIP. Interacts with CELF2/CUGBP2. Interacts with RBM47. As to expression, widely expressed with highest levels in brain, liver, pancreas, colon and spleen.

The protein resides in the nucleus. It is found in the endoplasmic reticulum. It localises to the cytoplasm. In terms of biological role, essential component of the apolipoprotein B mRNA editing enzyme complex which is responsible for the postranscriptional editing of a CAA codon for Gln to a UAA codon for stop in APOB mRNA. Binds to APOB mRNA and is probably responsible for docking the catalytic subunit, APOBEC1, to the mRNA to allow it to deaminate its target cytosine. The complex also protects the edited APOB mRNA from nonsense-mediated decay. This chain is APOBEC1 complementation factor (A1CF), found in Homo sapiens (Human).